Reading from the N-terminus, the 543-residue chain is Glucose-6-phosphate isomerase (543 aa).

E353 (proton donor) is an active-site residue. Residues H384 and K504 contribute to the active site.

It belongs to the GPI family.

The protein localises to the cytoplasm. It carries out the reaction alpha-D-glucose 6-phosphate = beta-D-fructose 6-phosphate. The protein operates within carbohydrate biosynthesis; gluconeogenesis. It functions in the pathway carbohydrate degradation; glycolysis; D-glyceraldehyde 3-phosphate and glycerone phosphate from D-glucose: step 2/4. In terms of biological role, catalyzes the reversible isomerization of glucose-6-phosphate to fructose-6-phosphate. The protein is Glucose-6-phosphate isomerase of Roseiflexus sp. (strain RS-1).